Consider the following 179-residue polypeptide: MYITPEPCWAWMYHHDEDKLALELGEDWLFLSPFSARHLIPDSLHGAAFSAQHADYYNDVLDRLRKQLPNSAPEVVQIALNLTAAHFFSLPMMPKSWFFQTSAHIAYACNGKLVELDTGSERARFAVVDGGEQSSLLMLLEQSLALGNKKTMKQFELIKVMNDRLSPCQSLKHRRIVAA.

Belongs to the ZapC family. Interacts directly with FtsZ.

The protein resides in the cytoplasm. Functionally, contributes to the efficiency of the cell division process by stabilizing the polymeric form of the cell division protein FtsZ. Acts by promoting interactions between FtsZ protofilaments and suppressing the GTPase activity of FtsZ. In Ferrimonas balearica (strain DSM 9799 / CCM 4581 / KCTC 23876 / PAT), this protein is Cell division protein ZapC.